A 283-amino-acid polypeptide reads, in one-letter code: Elongation factor Ts (283 aa).

The involved in Mg(2+) ion dislocation from EF-Tu stretch occupies residues 80–83; that stretch reads TDFV.

Belongs to the EF-Ts family.

Its subcellular location is the cytoplasm. In terms of biological role, associates with the EF-Tu.GDP complex and induces the exchange of GDP to GTP. It remains bound to the aminoacyl-tRNA.EF-Tu.GTP complex up to the GTP hydrolysis stage on the ribosome. This Pectobacterium atrosepticum (strain SCRI 1043 / ATCC BAA-672) (Erwinia carotovora subsp. atroseptica) protein is Elongation factor Ts.